Here is a 154-residue protein sequence, read N- to C-terminus: Superoxide dismutase [Cu-Zn] (154 aa).

K19 participates in a covalent cross-link: Glycyl lysine isopeptide (Lys-Gly) (interchain with G-Cter in SUMO). 2 positions are modified to phosphoserine: S26 and S39. A Zn(2+)-binding site is contributed by E43. Cu cation-binding residues include H47, H49, and H64. C58 and C147 are disulfide-bonded. Zn(2+) is bound at residue H64. Residue K70 forms a Glycyl lysine isopeptide (Lys-Gly) (interchain with G-Cter in SUMO) linkage. Zn(2+) contacts are provided by H72, H81, and D84. Residues S99 and S117 each carry the phosphoserine modification. Cu cation is bound at residue H121. Phosphothreonine is present on residues T132 and T138. Position 144 (R144) interacts with substrate.

Belongs to the Cu-Zn superoxide dismutase family. Homodimer in holo form. In apo form, heterodimer with CCS1. Zinc-binding at 'His-16' of CCS1 and Glu-43 of apo-SOD1 is required for this heterodimerization. Cu cation is required as a cofactor. Zn(2+) serves as cofactor.

The protein resides in the cytoplasm. It is found in the mitochondrion intermembrane space. The catalysed reaction is 2 superoxide + 2 H(+) = H2O2 + O2. Destroys radicals which are normally produced within the cells and which are toxic to biological systems. The chain is Superoxide dismutase [Cu-Zn] from Saccharomyces cerevisiae (strain ATCC 204508 / S288c) (Baker's yeast).